Consider the following 536-residue polypeptide: Multicopper oxidase terE (536 aa).

Residues 1 to 21 (MHWHGLSQSTAPFSDGSPQAS) form a disordered region. 3 consecutive Plastocyanin-like domains span residues 1 to 67 (MHWH…VEEK), 79 to 238 (ERIL…LSYN), and 354 to 488 (TVQK…VWMM). Cu cation-binding residues include histidine 2, histidine 4, histidine 48, and histidine 50. Residue histidine 397 participates in Cu cation binding.

Belongs to the multicopper oxidase family.

It participates in secondary metabolite biosynthesis. Multicopper oxidase; part of the gene cluster that mediates the biosynthesis of terrein, a fungal metabolite with ecological, antimicrobial, antiproliferative, and antioxidative activities. The first step in the pathway is performed by the polyketide synthase terA that produces 4-hydroxy-6-methylpyranon (4-HMP), orsellinic acid (OA), and 2,3-dehydro-6-hydroxymellein (2,3-dehydro-6-HM) by condensing acetyl-CoA with two, three, or four malonyl-CoA units, respectively. 4-HMP and OA are not pathway intermediates, but are rather shunt or side products. 2,3-dehydro-6-HM is further converted to 6-hydroxymellein (6-HM) by the 6-hydroxymellein synthase terB. The monooxygenases terC and terD, the multicopper oxidase terE and the Kelch-like protein terF are then involved in the transformation of 6-HM to terrein. Even if they are co-regulated with the other terrein cluster genes, terH and terI seem to be dispensable for terrein production; whereas one or both of the 2 transporters terG and terJ are probably required for efficient secretion of metabolites. The protein is Multicopper oxidase terE of Aspergillus terreus (strain NIH 2624 / FGSC A1156).